Consider the following 293-residue polypeptide: Glycine--tRNA ligase alpha subunit (293 aa).

This sequence belongs to the class-II aminoacyl-tRNA synthetase family. As to quaternary structure, tetramer of two alpha and two beta subunits.

The protein resides in the cytoplasm. It carries out the reaction tRNA(Gly) + glycine + ATP = glycyl-tRNA(Gly) + AMP + diphosphate. This chain is Glycine--tRNA ligase alpha subunit, found in Oceanobacillus iheyensis (strain DSM 14371 / CIP 107618 / JCM 11309 / KCTC 3954 / HTE831).